A 391-amino-acid chain; its full sequence is CBS domain-containing protein CBSX5 (391 aa).

CBS domains lie at 16 to 81 (GKPP…DHDH) and 331 to 391 (MARK…ENDM).

This chain is CBS domain-containing protein CBSX5 (CBSX5), found in Arabidopsis thaliana (Mouse-ear cress).